We begin with the raw amino-acid sequence, 194 residues long: Probable nicotinate-nucleotide adenylyltransferase (194 aa).

It belongs to the NadD family.

It catalyses the reaction nicotinate beta-D-ribonucleotide + ATP + H(+) = deamido-NAD(+) + diphosphate. It functions in the pathway cofactor biosynthesis; NAD(+) biosynthesis; deamido-NAD(+) from nicotinate D-ribonucleotide: step 1/1. Functionally, catalyzes the reversible adenylation of nicotinate mononucleotide (NaMN) to nicotinic acid adenine dinucleotide (NaAD). The chain is Probable nicotinate-nucleotide adenylyltransferase from Chlorobium luteolum (strain DSM 273 / BCRC 81028 / 2530) (Pelodictyon luteolum).